Here is a 616-residue protein sequence, read N- to C-terminus: MAU2 chromatid cohesion factor homolog (616 aa).

TPR repeat units lie at residues 90–123, 445–478, and 485–518; these read FDTASLLAQLYQQQEQSSLAKPVLRKAIELSQHN, GSFYYVQGLNAFHKSSFHEAKRFLRETLKMANAE, and SCSLVLLSHVFLSIGNSKESMNMVTPAMQLASKI.

Belongs to the SCC4/mau-2 family. As to quaternary structure, component of the cohesin loading complex.

The protein resides in the nucleus. It localises to the nucleoplasm. Required for association of the cohesin complex with chromatin during interphase. Plays a role in sister chromatid cohesion and normal progression through prometaphase. The polypeptide is MAU2 chromatid cohesion factor homolog (Culex quinquefasciatus (Southern house mosquito)).